We begin with the raw amino-acid sequence, 439 residues long: Glutamate--tRNA ligase 2 (439 aa).

Positions 9 to 19 (PSPTGHLHVGN) match the 'HIGH' region motif. Positions 233–237 (KLSKR) match the 'KMSKS' region motif. Lys-236 is a binding site for ATP.

Belongs to the class-I aminoacyl-tRNA synthetase family. Glutamate--tRNA ligase type 1 subfamily. Monomer.

Its subcellular location is the cytoplasm. It carries out the reaction tRNA(Glu) + L-glutamate + ATP = L-glutamyl-tRNA(Glu) + AMP + diphosphate. Functionally, catalyzes the attachment of glutamate to tRNA(Glu) in a two-step reaction: glutamate is first activated by ATP to form Glu-AMP and then transferred to the acceptor end of tRNA(Glu). The protein is Glutamate--tRNA ligase 2 of Sphingopyxis alaskensis (strain DSM 13593 / LMG 18877 / RB2256) (Sphingomonas alaskensis).